We begin with the raw amino-acid sequence, 178 residues long: MVRGLFIGRFQPPHWGHVWAIKAILSEVDEVIIVLGSAQFNYIEKDPFTVGERIWMLREGLREGGVDLSRVIIVPVPNIENNAAWLSHIKSYLPPFQVAYTGNPFVAMLLKEGGVEVRQQPIFDRGKYVSTRIREMMIKGDSTWRELVPNSVARIIDEVKGVERLRVIITGEAEPHRW.

The protein belongs to the archaeal NMN adenylyltransferase family.

Its subcellular location is the cytoplasm. The enzyme catalyses beta-nicotinamide D-ribonucleotide + ATP + H(+) = diphosphate + NAD(+). It functions in the pathway cofactor biosynthesis; NAD(+) biosynthesis; NAD(+) from nicotinamide D-ribonucleotide: step 1/1. This is Nicotinamide-nucleotide adenylyltransferase from Caldivirga maquilingensis (strain ATCC 700844 / DSM 13496 / JCM 10307 / IC-167).